The sequence spans 132 residues: Small ribosomal subunit protein uS8 (132 aa).

Belongs to the universal ribosomal protein uS8 family. Part of the 30S ribosomal subunit. Contacts proteins S5 and S12.

Its function is as follows. One of the primary rRNA binding proteins, it binds directly to 16S rRNA central domain where it helps coordinate assembly of the platform of the 30S subunit. The protein is Small ribosomal subunit protein uS8 of Clostridium perfringens (strain ATCC 13124 / DSM 756 / JCM 1290 / NCIMB 6125 / NCTC 8237 / Type A).